We begin with the raw amino-acid sequence, 316 residues long: Acetyl-coenzyme A carboxylase carboxyl transferase subunit beta (316 aa).

One can recognise a CoA carboxyltransferase N-terminal domain in the interval 29 to 298 (LWTKCPNCGV…LLSPLNSHHH (270 aa)). Positions 33, 36, 52, and 55 each coordinate Zn(2+). Residues 33–55 (CPNCGVLAYTKDLLANQLVCLDC) form a C4-type zinc finger.

It belongs to the AccD/PCCB family. In terms of assembly, acetyl-CoA carboxylase is a heterohexamer composed of biotin carboxyl carrier protein (AccB), biotin carboxylase (AccC) and two subunits each of ACCase subunit alpha (AccA) and ACCase subunit beta (AccD). Zn(2+) is required as a cofactor.

It localises to the cytoplasm. The catalysed reaction is N(6)-carboxybiotinyl-L-lysyl-[protein] + acetyl-CoA = N(6)-biotinyl-L-lysyl-[protein] + malonyl-CoA. The protein operates within lipid metabolism; malonyl-CoA biosynthesis; malonyl-CoA from acetyl-CoA: step 1/1. Its function is as follows. Component of the acetyl coenzyme A carboxylase (ACC) complex. Biotin carboxylase (BC) catalyzes the carboxylation of biotin on its carrier protein (BCCP) and then the CO(2) group is transferred by the transcarboxylase to acetyl-CoA to form malonyl-CoA. This chain is Acetyl-coenzyme A carboxylase carboxyl transferase subunit beta, found in Microcystis aeruginosa (strain NIES-843 / IAM M-2473).